Consider the following 160-residue polypeptide: Small ribosomal subunit protein uS7 (160 aa).

The protein belongs to the universal ribosomal protein uS7 family. As to quaternary structure, part of the 30S ribosomal subunit. Contacts proteins S9 and S11.

In terms of biological role, one of the primary rRNA binding proteins, it binds directly to 16S rRNA where it nucleates assembly of the head domain of the 30S subunit. Is located at the subunit interface close to the decoding center, probably blocks exit of the E-site tRNA. This chain is Small ribosomal subunit protein uS7, found in Rickettsia prowazekii (strain Madrid E).